A 396-amino-acid polypeptide reads, in one-letter code: Corticosteroid-binding globulin (396 aa).

A signal peptide spans 1–22 (MSLALYTCLLWLCTSGLWTAQA). Asn88 and Asn216 each carry an N-linked (GlcNAc...) asparagine glycan. Residue Gln246 coordinates cortisol. N-linked (GlcNAc...) asparagine glycosylation occurs at Asn252. Asp278 contacts cortisol. Residues Asn319 and Asn352 are each glycosylated (N-linked (GlcNAc...) asparagine). Trp384 contributes to the cortisol binding site.

The protein belongs to the serpin family. Expressed by the liver; secreted in plasma.

The protein resides in the secreted. Major transport protein for glucocorticoids and progestins in the blood of almost all vertebrate species. The sequence is that of Corticosteroid-binding globulin (Serpina6) from Rattus norvegicus (Rat).